The chain runs to 168 residues: SPbeta prophage-derived uncharacterized protein YonX (168 aa).

Residues 1-53 (MNAQLFNLESRLDELENEINTQYCELDTNLDALKSNRIELESQLEKFESSLTN) are a coiled coil.

The polypeptide is SPbeta prophage-derived uncharacterized protein YonX (yonX) (Bacillus subtilis (strain 168)).